A 305-amino-acid chain; its full sequence is Glycine--tRNA ligase alpha subunit (305 aa).

This sequence belongs to the class-II aminoacyl-tRNA synthetase family. As to quaternary structure, tetramer of two alpha and two beta subunits.

The protein resides in the cytoplasm. It carries out the reaction tRNA(Gly) + glycine + ATP = glycyl-tRNA(Gly) + AMP + diphosphate. The chain is Glycine--tRNA ligase alpha subunit from Streptococcus suis (strain 05ZYH33).